Here is a 93-residue protein sequence, read N- to C-terminus: Alpha-defensin 24 (93 aa).

The signal sequence occupies residues 1 to 19 (MKTLILLSALVLLAFQVQA). Positions 20-58 (DPIQNTDEETKTEEQPGEEDQAVSVSFGDPEGASLQEES) are excised as a propeptide. Residues 23–54 (QNTDEETKTEEQPGEEDQAVSVSFGDPEGASL) form a disordered region. Intrachain disulfides connect C64–C92, C66–C81, and C71–C91.

This sequence belongs to the alpha-defensin family.

Its subcellular location is the secreted. May have microbicidal activities. The polypeptide is Alpha-defensin 24 (Defa24) (Mus musculus (Mouse)).